A 281-amino-acid chain; its full sequence is S-methyl-5'-thioadenosine phosphorylase (281 aa).

Phosphate is bound by residues serine 15, 58–59 (RH), and 91–92 (TA). Methionine 194 is a binding site for substrate. Threonine 195 contacts phosphate. 218–220 (DYD) lines the substrate pocket.

The protein belongs to the PNP/MTAP phosphorylase family. MTAP subfamily. Homotrimer.

It is found in the cytoplasm. It localises to the nucleus. It catalyses the reaction S-methyl-5'-thioadenosine + phosphate = 5-(methylsulfanyl)-alpha-D-ribose 1-phosphate + adenine. The protein operates within amino-acid biosynthesis; L-methionine biosynthesis via salvage pathway; S-methyl-5-thio-alpha-D-ribose 1-phosphate from S-methyl-5'-thioadenosine (phosphorylase route): step 1/1. Catalyzes the reversible phosphorylation of S-methyl-5'-thioadenosine (MTA) to adenine and 5-methylthioribose-1-phosphate. Involved in the breakdown of MTA, a major by-product of polyamine biosynthesis. Responsible for the first step in the methionine salvage pathway after MTA has been generated from S-adenosylmethionine. Has broad substrate specificity with 6-aminopurine nucleosides as preferred substrates. This chain is S-methyl-5'-thioadenosine phosphorylase (mtap), found in Xenopus tropicalis (Western clawed frog).